Consider the following 157-residue polypeptide: Beta-defensin 125 (157 aa).

Residues 1–20 (MNLLMLTFIICGLLTQVTKG) form the signal peptide. Cystine bridges form between Cys-27-Cys-55, Cys-35-Cys-49, and Cys-39-Cys-56. A disordered region spans residues 109 to 157 (GETITPETNTPETTMPPSETTSSKTTMPPSETATSETMPPPSQTALTHN). Residues 110–140 (ETITPETNTPETTMPPSETTSSKTTMPPSET) are compositionally biased toward low complexity. Residues 141 to 157 (ATSETMPPPSQTALTHN) show a composition bias toward polar residues.

Belongs to the beta-defensin family.

The protein resides in the secreted. Functionally, has antibacterial activity. The chain is Beta-defensin 125 (DEFB125) from Pongo pygmaeus (Bornean orangutan).